The primary structure comprises 1345 residues: Mediator of RNA polymerase II transcription subunit 13 (1345 aa).

2 disordered regions span residues 363–387 and 402–537; these read KSQTNQQQTSSNSKVSPSDAASPYP and FMAS…AESG. Low complexity predominate over residues 364-375; that stretch reads SQTNQQQTSSNS. Over residues 406–415 the composition is skewed to polar residues; it reads PSVSGNSNEL. The span at 469–482 shows a compositional bias: acidic residues; that stretch reads LFGEEDEDEDDADL. The segment covering 486–501 has biased composition (polar residues); it reads SNNDSTGESNANNSKG.

This sequence belongs to the Mediator complex subunit 13 family. Component of the SRB8-11 complex, which itself associates with the Mediator complex.

The protein resides in the nucleus. Functionally, component of the SRB8-11 complex. The SRB8-11 complex is a regulatory module of the Mediator complex which is itself involved in regulation of basal and activated RNA polymerase II-dependent transcription. The SRB8-11 complex may be involved in the transcriptional repression of a subset of genes regulated by Mediator. It may inhibit the association of the Mediator complex with RNA polymerase II to form the holoenzyme complex. In Candida glabrata (strain ATCC 2001 / BCRC 20586 / JCM 3761 / NBRC 0622 / NRRL Y-65 / CBS 138) (Yeast), this protein is Mediator of RNA polymerase II transcription subunit 13 (SSN2).